A 663-amino-acid chain; its full sequence is Rho GTPase-activating protein 18 (663 aa).

A disordered region spans residues 15–37; sequence YHPSGKDQTVGNSHAKAGEEATS. A phosphoserine mark is found at Ser-66 and Ser-69. The residue at position 158 (Thr-158) is a Phosphothreonine. Disordered stretches follow at residues 179–227 and 243–277; these read RESK…PAPE and QKES…TRIG. Basic and acidic residues-rich tracts occupy residues 197–219 and 245–258; these read NENK…KLIP and ESSK…KGDD. A Phosphoserine modification is found at Ser-263. Residues 324–523 form the Rho-GAP domain; it reads VPLTALLEQD…LLIKYQKLLW (200 aa). The residue at position 610 (Ser-610) is a Phosphoserine.

In terms of assembly, interacts with MPHOSPH6.

The protein localises to the cytoplasm. In terms of biological role, rho GTPase activating protein that suppresses F-actin polymerization by inhibiting Rho. Rho GTPase activating proteins act by converting Rho-type GTPases to an inactive GDP-bound state. Plays a key role in tissue tension and 3D tissue shape by regulating cortical actomyosin network formation. Acts downstream of YAP1 and inhibits actin polymerization, which in turn reduces nuclear localization of YAP1. Regulates cell shape, spreading, and migration. This is Rho GTPase-activating protein 18 from Homo sapiens (Human).